A 366-amino-acid chain; its full sequence is MMERTIETATKQYPLLLGDGAARALPRLLRSLACPPGTKLFIITDDAVAPLYLDEVRAMLAAAEYDVYAYIIPSGEAAKSFDNYYACQTAALQCSLDRRSVIIALGGGVVGDLAGFVAATYMRGIRYIQMPTTLLAHDSAVGGKVAINHPLGKNMIGAFHQPEAVVYDTTFLRTLPERELRSGFAEVIKHALIRDRRFYEWLRAEVKTLADLRGEALTYCIEKGIDIKASIVREDEKETSVRAHLNFGHTLGHALESELGYGTLTHGEAVAIGMLFAVFVSERLYGHSFAEHRFAEWFARYGFPVSLPTTVEADRLLEKMKGDKKAYAGTVRMVLLREIGDVEVVELEDDKLLAWLDEFAKQGGGR.

NAD(+)-binding positions include S74–K79, G108–D112, T132–T133, K144, K153, and F171–T174. Zn(2+) is bound by residues E186, H249, and H266.

Belongs to the sugar phosphate cyclases superfamily. Dehydroquinate synthase family. Co(2+) serves as cofactor. Zn(2+) is required as a cofactor. Requires NAD(+) as cofactor.

The protein localises to the cytoplasm. The catalysed reaction is 7-phospho-2-dehydro-3-deoxy-D-arabino-heptonate = 3-dehydroquinate + phosphate. Its pathway is metabolic intermediate biosynthesis; chorismate biosynthesis; chorismate from D-erythrose 4-phosphate and phosphoenolpyruvate: step 2/7. Catalyzes the conversion of 3-deoxy-D-arabino-heptulosonate 7-phosphate (DAHP) to dehydroquinate (DHQ). This Geobacillus thermodenitrificans (strain NG80-2) protein is 3-dehydroquinate synthase.